The sequence spans 416 residues: Serine hydroxymethyltransferase (416 aa).

(6S)-5,6,7,8-tetrahydrofolate is bound by residues L117 and 121 to 123 (GHL). Position 226 is an N6-(pyridoxal phosphate)lysine (K226). Residue E242 coordinates (6S)-5,6,7,8-tetrahydrofolate.

This sequence belongs to the SHMT family. Homodimer. Requires pyridoxal 5'-phosphate as cofactor.

The protein localises to the cytoplasm. It carries out the reaction (6R)-5,10-methylene-5,6,7,8-tetrahydrofolate + glycine + H2O = (6S)-5,6,7,8-tetrahydrofolate + L-serine. The protein operates within one-carbon metabolism; tetrahydrofolate interconversion. It functions in the pathway amino-acid biosynthesis; glycine biosynthesis; glycine from L-serine: step 1/1. In terms of biological role, catalyzes the reversible interconversion of serine and glycine with tetrahydrofolate (THF) serving as the one-carbon carrier. This reaction serves as the major source of one-carbon groups required for the biosynthesis of purines, thymidylate, methionine, and other important biomolecules. Also exhibits THF-independent aldolase activity toward beta-hydroxyamino acids, producing glycine and aldehydes, via a retro-aldol mechanism. This chain is Serine hydroxymethyltransferase, found in Endomicrobium trichonymphae.